Consider the following 421-residue polypeptide: F-box protein At2g17690 (421 aa).

Residues 2–50 (GDWSKLPEELLGLIALRLYSVIELIRFRSICKSWRSSASGVNKNHSLSS) form the F-box domain.

Functionally, involved in heat stress response. Contributes to recovery from heat stress. The sequence is that of F-box protein At2g17690 from Arabidopsis thaliana (Mouse-ear cress).